Consider the following 875-residue polypeptide: Alanine--tRNA ligase (875 aa).

Positions 564, 568, 666, and 670 each coordinate Zn(2+).

This sequence belongs to the class-II aminoacyl-tRNA synthetase family. In terms of assembly, homotetramer. Zn(2+) is required as a cofactor.

The protein resides in the cytoplasm. The enzyme catalyses tRNA(Ala) + L-alanine + ATP = L-alanyl-tRNA(Ala) + AMP + diphosphate. Functionally, catalyzes the attachment of alanine to tRNA(Ala) in a two-step reaction: alanine is first activated by ATP to form Ala-AMP and then transferred to the acceptor end of tRNA(Ala). Also edits incorrectly charged Ser-tRNA(Ala) and Gly-tRNA(Ala) via its editing domain. The protein is Alanine--tRNA ligase of Yersinia pestis bv. Antiqua (strain Angola).